Reading from the N-terminus, the 209-residue chain is Large ribosomal subunit protein uL3 (209 aa).

Residues 141–164 (RAVGSMGGSSDPSRTFKSKKMPGH) are disordered.

The protein belongs to the universal ribosomal protein uL3 family. As to quaternary structure, part of the 50S ribosomal subunit. Forms a cluster with proteins L14 and L19.

One of the primary rRNA binding proteins, it binds directly near the 3'-end of the 23S rRNA, where it nucleates assembly of the 50S subunit. The protein is Large ribosomal subunit protein uL3 of Clostridium acetobutylicum (strain ATCC 824 / DSM 792 / JCM 1419 / IAM 19013 / LMG 5710 / NBRC 13948 / NRRL B-527 / VKM B-1787 / 2291 / W).